The sequence spans 122 residues: Large ribosomal subunit protein uL14 (122 aa).

The protein belongs to the universal ribosomal protein uL14 family. Part of the 50S ribosomal subunit. Forms a cluster with proteins L3 and L19. In the 70S ribosome, L14 and L19 interact and together make contacts with the 16S rRNA in bridges B5 and B8.

Functionally, binds to 23S rRNA. Forms part of two intersubunit bridges in the 70S ribosome. This is Large ribosomal subunit protein uL14 from Bacillus cytotoxicus (strain DSM 22905 / CIP 110041 / 391-98 / NVH 391-98).